The following is an 826-amino-acid chain: Arf-GAP with ANK repeat and PH domain-containing protein cnt-1 (826 aa).

Residues 275–373 form the PH domain; the sequence is DVMMEGYLYK…WMRALQRTIL (99 aa). The Arf-GAP domain occupies 447-572; sequence TTAFEQVRRV…RFAVAEDTRA (126 aa). Residues 462-485 form a C4-type zinc finger; that stretch reads CADCGSPAPKWVSINLGVVLCIEC. Residues 570–604 form a disordered region; sequence TRARSSATNRQEHLKHKTSIGGNSSSNGVNRSSSY. A compositionally biased stretch (low complexity) spans 588–603; the sequence is SIGGNSSSNGVNRSSS. ANK repeat units follow at residues 690 to 719, 723 to 752, and 756 to 789; these read NGTT…KINM, KLNT…DSNL, and DSKT…NADF.

Interacts (via C-terminal ankyrin repeat) with rab-10 (GTP-bound form); the interaction is required for cnt-1 recruitment to endosomes. Interacts (via C-terminal ankyrin repeat) with rab-8 (GTP-bound form) and rab-35 (GTP-bound form). Post-translationally, cleaved by caspase ced-3 after Asp-382 and Asp-609. Cleavage at Asp-382 is required for subsequent cleavage at Asp-609.

The protein resides in the cytoplasm. It localises to the recycling endosome membrane. It is found in the basolateral cell membrane. Its subcellular location is the apical cell membrane. The protein localises to the cell membrane. Functionally, GTPase-activating protein for the ADP ribosylation factor family. Regulates endosome recycling downstream of rab-10 and upstream of arf-6. Promotes apoptosis during embryonic development. Produced by caspase ced-3-mediated cleavage, and translocates to the plasma membrane where it prevents the activation of the prosurvival Akt-1/2 and sgk-1 signaling pathway by competing with Akt-1/2 for the binding to PtdIns(3,4,5)P3. The chain is Arf-GAP with ANK repeat and PH domain-containing protein cnt-1 from Caenorhabditis elegans.